The following is a 311-amino-acid chain: Transcriptional regulatory protein MoaR1 (311 aa).

Positions 15–117 (LNATTAGAVQ…SEPPGYRLLI (103 aa)) form a DNA-binding region, ompR/PhoB-type.

It belongs to the AfsR/DnrI/RedD regulatory family.

In terms of biological role, acts as a positive transcriptional regulator of the molybdopterin biosynthesis moa1 locus, promoting the expression of the moaA1B1C1D1 genes. This Mycobacterium bovis (strain BCG / Pasteur 1173P2) protein is Transcriptional regulatory protein MoaR1 (moaR1).